The primary structure comprises 248 residues: Granzyme-like protein 1 (248 aa).

The signal sequence occupies residues 1 to 18; the sequence is MNLLLLLLTVSLAPTTEA. The propeptide at 19-20 is activation peptide; it reads AE. In terms of domain architecture, Peptidase S1 spans 21 to 246; sequence IIGGHEADPH…FLSWIEETMK (226 aa). A disulfide bridge connects residues cysteine 50 and cysteine 66. The active-site Charge relay system is the histidine 65. N-linked (GlcNAc...) asparagine glycosylation occurs at asparagine 72. The active-site Charge relay system is aspartate 109. 2 disulfide bridges follow: cysteine 143–cysteine 210 and cysteine 174–cysteine 189. Serine 204 (charge relay system) is an active-site residue.

It belongs to the peptidase S1 family. Granzyme subfamily. Duodenum.

In terms of biological role, this enzyme is necessary for target cell lysis in cell-mediated immune responses. The polypeptide is Granzyme-like protein 1 (Rattus norvegicus (Rat)).